The primary structure comprises 210 residues: Protein PF1979 (210 aa).

The AMMECR1 domain occupies 7 to 201 (EWGEFLVRLA…EEYPRGPVKR (195 aa)).

This is Protein PF1979 from Pyrococcus furiosus (strain ATCC 43587 / DSM 3638 / JCM 8422 / Vc1).